The primary structure comprises 117 residues: MSNLAYQPEKQQRHAISPEKKVIVKKRASITLGEKVLLVLFAAAVLSVSLLIVSKAYAAYQTNIEVQKLEEQISSENKQIGDLEKSVADLSKPQRIMDIAKKNGLNLKDKKVKNIQE.

Topologically, residues 1-35 are cytoplasmic; that stretch reads MSNLAYQPEKQQRHAISPEKKVIVKKRASITLGEK. Residues 36–56 form a helical membrane-spanning segment; that stretch reads VLLVLFAAAVLSVSLLIVSKA. At 57–117 the chain is on the extracellular side; sequence YAAYQTNIEV…KDKKVKNIQE (61 aa).

This sequence belongs to the FtsL family. Monomer. Interacts with DivIB and DivIC. Interaction with DivIC stabilizes FtsL against RasP cleavage. Cleaved by RasP. Cleavage is important for turnover and function of FtsL.

It localises to the cell membrane. Its function is as follows. Essential cell division protein that may play a structural role. Probably involved in the regulation of the timing of cell division. Also required for sporulation. The sequence is that of Cell division protein FtsL from Bacillus subtilis (strain 168).